Reading from the N-terminus, the 240-residue chain is UDP-2,3-diacylglucosamine hydrolase (240 aa).

Mn(2+) contacts are provided by D8, H10, D41, N79, and H114. 79–80 serves as a coordination point for substrate; that stretch reads NR. Positions 122, 160, 164, 167, and 195 each coordinate substrate. Mn(2+) contacts are provided by H195 and H197.

The protein belongs to the LpxH family. It depends on Mn(2+) as a cofactor.

Its subcellular location is the cell inner membrane. The catalysed reaction is UDP-2-N,3-O-bis[(3R)-3-hydroxytetradecanoyl]-alpha-D-glucosamine + H2O = 2-N,3-O-bis[(3R)-3-hydroxytetradecanoyl]-alpha-D-glucosaminyl 1-phosphate + UMP + 2 H(+). It participates in glycolipid biosynthesis; lipid IV(A) biosynthesis; lipid IV(A) from (3R)-3-hydroxytetradecanoyl-[acyl-carrier-protein] and UDP-N-acetyl-alpha-D-glucosamine: step 4/6. Hydrolyzes the pyrophosphate bond of UDP-2,3-diacylglucosamine to yield 2,3-diacylglucosamine 1-phosphate (lipid X) and UMP by catalyzing the attack of water at the alpha-P atom. Involved in the biosynthesis of lipid A, a phosphorylated glycolipid that anchors the lipopolysaccharide to the outer membrane of the cell. The chain is UDP-2,3-diacylglucosamine hydrolase from Escherichia coli O6:H1 (strain CFT073 / ATCC 700928 / UPEC).